Consider the following 383-residue polypeptide: MKNKLPPFIEIYRALIATPSISATEEALDQSNADLITLLADWFKDLGFNVEVQPVPGTRNKFNMLASYGQGAGGLLLAGHTDTVPFDDGRWTRDPFTLTEHDGKLYGLGTADMKGFFAFILDALRDVDVTKLKKPLYILATADEETSMAGARYFAETTALRPDCAIIGEPTSLQPVRAHKGHISNAIRIQGQSGHSSDPARGVNAIELMHDAIGHILQLRDNLKERYHYEAFTVPYPTLNLGHIHGGDASNRICACCELHMDIRPQPGMTLNELNGLLNDALAPVSERWPGRLTVDELHPPIPGYECPPNHQLVEVVEKLLGAKTEVVNYCTEAPFIQTLCPTLVLGPGSINQAHQPDEYLETRFIKPTRELIIQVIHHFCWH.

A Zn(2+)-binding site is contributed by histidine 80. The active site involves aspartate 82. Aspartate 112 is a Zn(2+) binding site. The active site involves glutamate 144. Glutamate 145, glutamate 169, and histidine 355 together coordinate Zn(2+).

The protein belongs to the peptidase M20A family. ArgE subfamily. In terms of assembly, homodimer. Requires Zn(2+) as cofactor. It depends on Co(2+) as a cofactor. The cofactor is glutathione.

The protein localises to the cytoplasm. The catalysed reaction is N(2)-acetyl-L-ornithine + H2O = L-ornithine + acetate. It participates in amino-acid biosynthesis; L-arginine biosynthesis; L-ornithine from N(2)-acetyl-L-ornithine (linear): step 1/1. Catalyzes the hydrolysis of the amide bond of N(2)-acetylated L-amino acids. Cleaves the acetyl group from N-acetyl-L-ornithine to form L-ornithine, an intermediate in L-arginine biosynthesis pathway, and a branchpoint in the synthesis of polyamines. This chain is Acetylornithine deacetylase, found in Shigella flexneri serotype 5b (strain 8401).